The following is a 433-amino-acid chain: Glutamate-1-semialdehyde 2,1-aminomutase (433 aa).

Lys-271 is subject to N6-(pyridoxal phosphate)lysine.

The protein belongs to the class-III pyridoxal-phosphate-dependent aminotransferase family. HemL subfamily. As to quaternary structure, homodimer. Requires pyridoxal 5'-phosphate as cofactor.

The protein resides in the cytoplasm. It carries out the reaction (S)-4-amino-5-oxopentanoate = 5-aminolevulinate. It functions in the pathway porphyrin-containing compound metabolism; protoporphyrin-IX biosynthesis; 5-aminolevulinate from L-glutamyl-tRNA(Glu): step 2/2. Its pathway is porphyrin-containing compound metabolism; chlorophyll biosynthesis. This Prochlorococcus marinus (strain SARG / CCMP1375 / SS120) protein is Glutamate-1-semialdehyde 2,1-aminomutase.